The primary structure comprises 564 residues: Asparagine synthetase domain-containing protein CG17486 (564 aa).

Cys-2 acts as the Nucleophile in catalysis. The 179-residue stretch at 2–180 (CGIFCSVVNN…PLGLFRVKLN (179 aa)) folds into the Glutamine amidotransferase type-2 domain. The 262-residue stretch at 280 to 541 (PFCRLCMQKL…GLRDVVFLKK (262 aa)) folds into the Asparagine synthetase domain.

The sequence is that of Asparagine synthetase domain-containing protein CG17486 from Drosophila melanogaster (Fruit fly).